Reading from the N-terminus, the 239-residue chain is MLVLFVATWSDLGLCKKRPKPGGWNTGGSRYPGQSSPGGNRYPPQSGGWGQPHGGGWGQPHGGGWGQPHGGGWGQPHGGGWGQGGGTHNQWNKPSKPKTNMKHMAGAAAAGAVVGGLGGYMLGSAMSRPLIHFGNDYEDRYYRENMYRYPNQVYYRPVDQYSNQNNFVHDCVNITIKQHTVTTTTKGENFTETDVKIMERVVEQMCITQYEKESQAYYQRGSSMVLFSSPPVILLISFL.

A signal peptide spans 1-15; that stretch reads MLVLFVATWSDLGLC. A disordered region spans residues 15–98; the sequence is CKKRPKPGGW…NQWNKPSKPK (84 aa). An interaction with ADGRG6 region spans residues 16 to 31; the sequence is KKRPKPGGWNTGGSRY. Residues 16–222 form an interaction with GRB2, ERI3 and SYN1 region; that stretch reads KKRPKPGGWN…ESQAYYQRGS (207 aa). A run of 5 repeats spans residues 44–51, 52–59, 60–67, 68–75, and 76–83. Residues 44 to 83 are 5 X 8 AA tandem repeats of P-H-G-G-G-W-G-Q; sequence PQSGGWGQPHGGGWGQPHGGGWGQPHGGGWGQPHGGGWGQ. The span at 47–87 shows a compositional bias: gly residues; it reads GGWGQPHGGGWGQPHGGGWGQPHGGGWGQPHGGGWGQGGGT. Cu(2+)-binding residues include H53, G54, G55, H61, G62, G63, H69, G70, G71, H77, G78, and G79. The cysteines at positions 171 and 206 are disulfide-linked. 2 N-linked (GlcNAc...) asparagine glycosylation sites follow: N173 and N189. Residue S222 is the site of GPI-anchor amidated serine attachment. Positions 223-239 are cleaved as a propeptide — removed in mature form; sequence SMVLFSSPPVILLISFL.

This sequence belongs to the prion family. In terms of assembly, monomer and homodimer. Has a tendency to aggregate into amyloid fibrils containing a cross-beta spine, formed by a steric zipper of superposed beta-strands. Soluble oligomers may represent an intermediate stage on the path to fibril formation. Copper binding may promote oligomerization. Interacts with GRB2, APP, ERI3/PRNPIP and SYN1. Mislocalized cytosolically exposed PrP interacts with MGRN1; this interaction alters MGRN1 subcellular location and causes lysosomal enlargement. Interacts with APP. Interacts with KIAA1191. Interacts with ADGRG6.

The protein resides in the cell membrane. Its subcellular location is the golgi apparatus. Its primary physiological function is unclear. May play a role in neuronal development and synaptic plasticity. May be required for neuronal myelin sheath maintenance. May promote myelin homeostasis through acting as an agonist for ADGRG6 receptor. May play a role in iron uptake and iron homeostasis. Soluble oligomers are toxic to cultured neuroblastoma cells and induce apoptosis (in vitro). Association with GPC1 (via its heparan sulfate chains) targets PRNP to lipid rafts. Also provides Cu(2+) or Zn(2+) for the ascorbate-mediated GPC1 deaminase degradation of its heparan sulfate side chains. The polypeptide is Major prion protein (PRNP) (Aotus trivirgatus (Three-striped night monkey)).